The following is a 120-amino-acid chain: Vanadium-binding protein 2 (120 aa).

The signal sequence occupies residues 1-20; that stretch reads MSKVIFALVLVVVLVACINA. The propeptide occupies 21-29; the sequence is TYVEFEEAY. Disulfide bonds link Cys34/Cys88, Cys38/Cys84, Cys42/Cys81, Cys48/Cys74, Cys52/Cys69, Cys56/Cys65, Cys92/Cys119, Cys97/Cys114, and Cys101/Cys111.

In terms of assembly, interacts with VIP1. In terms of tissue distribution, expressed in vanadocytes.

The protein resides in the cytoplasm. Functionally, acts as a vanadium reductase which may form an electron transfer cascade in conjunction with NADPH and glutathione through thiol disulfide exchange reactions. Partial cleavage of its disulfide bonds results in the reduction of V(5+) to V(4+). Binds up to 24 V(4+) ions per protein at pH 7.5. Also binds Fe(3+) and Cu(2+) and, to a lesser extent, Co(2+), Zn(2+) and Ni(2+). The polypeptide is Vanadium-binding protein 2 (Ascidia sydneiensis samea (Vanadium-rich ascidian)).